An 83-amino-acid chain; its full sequence is Protein kreg-1 (83 aa).

Residues 62 to 83 (GHHHHHHGHHFGHHHHHHHGHH) are disordered.

In terms of tissue distribution, weakly expressed in the intestine, but expression is up-regulated in response to Cu(2+).

Its function is as follows. Plays a role in the stress response to heavy metals such as copper, probably in a fos-1/kgb-1-dependent manner. This chain is Protein kreg-1, found in Caenorhabditis elegans.